Reading from the N-terminus, the 194-residue chain is Type II methyltransferase M.MjaVI (194 aa).

The protein belongs to the N(4)/N(6)-methyltransferase family. N(4) subfamily.

It catalyses the reaction a 2'-deoxycytidine in DNA + S-adenosyl-L-methionine = an N(4)-methyl-2'-deoxycytidine in DNA + S-adenosyl-L-homocysteine + H(+). Its function is as follows. A beta subtype methylase that recognizes the double-stranded sequence 5'-CCGG-3', methylates C-1 on both strands, and protects the DNA from cleavage by the MjaVI endonuclease. The chain is Type II methyltransferase M.MjaVI (mjaVIM) from Methanocaldococcus jannaschii (strain ATCC 43067 / DSM 2661 / JAL-1 / JCM 10045 / NBRC 100440) (Methanococcus jannaschii).